Reading from the N-terminus, the 651-residue chain is DNA endonuclease RBBP8 (651 aa).

Coiled-coil stretches lie at residues 35–84 and 117–138; these read LQEL…EDRL and ISEL…SLEL. Disordered regions lie at residues 138 to 199, 363 to 433, and 487 to 539; these read LERL…PESR, NGRL…EHQA, and YESC…SDKS. A compositionally biased stretch (polar residues) spans 363-379; the sequence is NGRLQSKNQETSEIETT. The span at 380-391 shows a compositional bias: basic and acidic residues; that stretch reads QDSKKKCLDGHT. Over residues 503-515 the composition is skewed to acidic residues; that stretch reads VYEEEREEDDPEE. Residues 525-539 are compositionally biased toward basic and acidic residues; sequence RPADRKPLVSDSDKS. Residues Thr599 and Thr611 each carry the phosphothreonine modification.

The protein belongs to the COM1/SAE2/CtIP family. As to quaternary structure, homotetramer; formed by antiparallel association of helical extensions protruding from the N-termini of two parallel coiled-coil dimers. Interacts with the MRN complex; the interaction links DNA sensing to resection. Interacts with samhd1. Post-translationally, phosphorylation at Thr-599 and Thr-611 promote interaction with nbn and recruitment to double-strand breaks (DSBs).

The protein localises to the nucleus. Its subcellular location is the chromosome. Endonuclease that cooperates with the MRE11-RAD50-NBN (MRN) complex in DNA-end resection, the first step of double-strand break (DSB) repair through the homologous recombination (HR) pathway. Functions downstream of the MRN complex and ATM, promotes ATR activation and its recruitment to DSBs in the S/G2 phase facilitating the generation of ssDNA. Specifically promotes the endonuclease activity of the MRN complex to clear DNA ends containing protein adducts: recruited to DSBs by nbn following phosphorylation, and promotes the endonuclease of mre11 to clear protein-DNA adducts and generate clean double-strand break ends. The chain is DNA endonuclease RBBP8 (rbbp8) from Danio rerio (Zebrafish).